Here is a 273-residue protein sequence, read N- to C-terminus: UPF0173 metal-dependent hydrolase Bpro_4324 (273 aa).

Belongs to the UPF0173 family.

This Polaromonas sp. (strain JS666 / ATCC BAA-500) protein is UPF0173 metal-dependent hydrolase Bpro_4324.